The primary structure comprises 354 residues: Methionine import ATP-binding protein MetN 2 (354 aa).

The ABC transporter domain occupies 6–250 (IELKNISVHF…PQKPLTKEFI (245 aa)). ATP is bound at residue 42-49 (GYSGAGKS).

It belongs to the ABC transporter superfamily. Methionine importer (TC 3.A.1.24) family. The complex is composed of two ATP-binding proteins (MetN), two transmembrane proteins (MetI) and a solute-binding protein (MetQ).

Its subcellular location is the cell membrane. The catalysed reaction is L-methionine(out) + ATP + H2O = L-methionine(in) + ADP + phosphate + H(+). It carries out the reaction D-methionine(out) + ATP + H2O = D-methionine(in) + ADP + phosphate + H(+). In terms of biological role, part of the ABC transporter complex MetNIQ involved in methionine import. Responsible for energy coupling to the transport system. This Oenococcus oeni (strain ATCC BAA-331 / PSU-1) protein is Methionine import ATP-binding protein MetN 2.